The chain runs to 201 residues: Small ribosomal subunit protein uS4c (201 aa).

Residues 16–43 (GALPGLTSKKPRSASDLRNQSRSGKRSQ) form a disordered region. Residues 89–169 (MRLDNILFRL…LPKHLTLHSF (81 aa)) enclose the S4 RNA-binding domain.

This sequence belongs to the universal ribosomal protein uS4 family. Part of the 30S ribosomal subunit. Contacts protein S5. The interaction surface between S4 and S5 is involved in control of translational fidelity.

The protein resides in the plastid. It is found in the chloroplast. In terms of biological role, one of the primary rRNA binding proteins, it binds directly to 16S rRNA where it nucleates assembly of the body of the 30S subunit. Its function is as follows. With S5 and S12 plays an important role in translational accuracy. The sequence is that of Small ribosomal subunit protein uS4c (rps4) from Nymphaea alba (White water-lily).